We begin with the raw amino-acid sequence, 770 residues long: Elongation factor G, mitochondrial (770 aa).

The N-terminal 24 residues, 1–24 (MLKLSFRSLTSRLPRLSTLVVRGY), are a transit peptide targeting the mitochondrion. One can recognise a tr-type G domain in the interval 57-353 (KQIRNIGISA…AVCDYLPNPS (297 aa)). Residues 66-73 (AHIDSGKT), 151-155 (DTPGH), and 205-208 (NKMD) contribute to the GTP site.

This sequence belongs to the TRAFAC class translation factor GTPase superfamily. Classic translation factor GTPase family. EF-G/EF-2 subfamily.

It localises to the mitochondrion. It participates in protein biosynthesis; polypeptide chain elongation. Functionally, mitochondrial GTPase that catalyzes the GTP-dependent ribosomal translocation step during translation elongation. During this step, the ribosome changes from the pre-translocational (PRE) to the post-translocational (POST) state as the newly formed A-site-bound peptidyl-tRNA and P-site-bound deacylated tRNA move to the P and E sites, respectively. Catalyzes the coordinated movement of the two tRNA molecules, the mRNA and conformational changes in the ribosome. This Schizosaccharomyces pombe (strain 972 / ATCC 24843) (Fission yeast) protein is Elongation factor G, mitochondrial (mef1).